The chain runs to 1171 residues: MSLRFVIGRAGSGKSTLCLREVQEELKQRPRGKTILYLVPEQMTFQTQQALIGSEDVRGSIRAQVFSFSRLAWKVLQEVGGASRLHIDEAGVHMLLRKIVESRKDGLSVFQKAAEQNGFFEHLGSMIAEFKRYNVTPSNVYEMWQQLDAHSSSAEQKLLANKVYDLQLLYDDFERALIGKYLDSEDYLQLLVEKLPQSEYVNGAEIYIDGFHSFSPQELEIVRQLMICGARVTITLTIDEKTLAQPVNELDLFYETTLTYEKIKQVAREEKIEIEKTIPLMEQPRFHSPALAHLEAHYEARPNEKFNGQASVTISTAANLRAEVEGVAREIRKLVANEKYRYRDIAVLLRNGESYYDVMRTLFTDYNIPHFIDEKRPMSHHPLVECIRSALEIISGNWRYDAVFRCVKTELLYPLDVRKETMREEMDKFENYCLAYGVQGKRWTSEDPWMYRRYRSLDDTNGMITDSEREMEEKINRLRDVVRTPVIRMQKRLKRAGTVMQMCEVVYLFLEELDVPKKLEELRIRAEESGDFLFATDHEQVWEEVMSLLDTFVEMLGEEKMSLSMFTDVMSTGLEALQFANIPPSLDQVLIANIDHSRLSDVKATFIIGVNEGVIPAAPMDEGMLSDEEREVLGAAGIELAPTTRQTLLEEQFVMYQMVTRASERLYISCPLADEEGKTLLASSFIKKIKRMFPNVKDSFITNDVNDLSRSEQISYVATPEVTLSYVMQQLQTWKRYGFEGNLDFWWDVYNFYVTSDEWKQKSSRVLSSLFYRNRAKKLSTAVSRDLYGDIIKGSVSRMELFNRCAYAHFAQHGLSLRERDIFKLDAPDIGELFHAALKKIADKLLRENRTWSDLSIKECEHLSVLVIEEIAPLLQRQILLSSNRHFYLKQKLQQIIFRTSIILREHAKSSGFVPVDLEVPFGMGGTGSLPPMEFSLPNGVKMEVVGRIDRVDKAEDENGTFLRIIDYKSSSKALDLTEVYYGLALQMLTYLDVVTSNAQMWMKKGQAASPAGVLYFHIHNPIVEMKGDASEAEIEKEILKKFKMKGLVLGDADVVRLMDNKLSTGSSDIISAGLKKDGSFSARSSIASEQEFNVLQKYVHHTFENIGKDITEGVIDIAPYKMGNKAACTFCNFKSVCQFDESLEDNQFRTLKDMKDSEAMEKIREEVGGE.

In terms of domain architecture, UvrD-like helicase ATP-binding spans 1–287 (MSLRFVIGRA…IPLMEQPRFH (287 aa)). ATP is bound at residue 8-15 (GRAGSGKS). Residues 281 to 587 (MEQPRFHSPA…QFANIPPSLD (307 aa)) form the UvrD-like helicase C-terminal domain. Residues Cys805, Cys1129, Cys1132, and Cys1138 each contribute to the [4Fe-4S] cluster site.

It belongs to the helicase family. AddB/RexB type 1 subfamily. Heterodimer of AddA and AddB. Mg(2+) is required as a cofactor. It depends on [4Fe-4S] cluster as a cofactor.

Its function is as follows. The heterodimer acts as both an ATP-dependent DNA helicase and an ATP-dependent, dual-direction single-stranded exonuclease. Recognizes the chi site generating a DNA molecule suitable for the initiation of homologous recombination. The AddB subunit has 5' -&gt; 3' nuclease activity but not helicase activity. The polypeptide is ATP-dependent helicase/deoxyribonuclease subunit B (Bacillus cereus (strain G9842)).